A 47-amino-acid polypeptide reads, in one-letter code: Large ribosomal subunit protein bL34 (47 aa).

Belongs to the bacterial ribosomal protein bL34 family.

The chain is Large ribosomal subunit protein bL34 from Mycobacterium sp. (strain JLS).